Here is an 85-residue protein sequence, read N- to C-terminus: DNA-directed RNA polymerase subunit beta'' (85 aa).

It belongs to the RNA polymerase beta' chain family. RpoC2 subfamily. In plastids the minimal PEP RNA polymerase catalytic core is composed of four subunits: alpha, beta, beta', and beta''. When a (nuclear-encoded) sigma factor is associated with the core the holoenzyme is formed, which can initiate transcription.

It is found in the plastid. The protein localises to the chloroplast. The catalysed reaction is RNA(n) + a ribonucleoside 5'-triphosphate = RNA(n+1) + diphosphate. DNA-dependent RNA polymerase catalyzes the transcription of DNA into RNA using the four ribonucleoside triphosphates as substrates. The protein is DNA-directed RNA polymerase subunit beta'' (rpoC2) of Galdieria sulphuraria (Red alga).